Reading from the N-terminus, the 125-residue chain is MLFYHCSSFSSSSSSSSSSASTRRLPFGHSWGTWSTDMCSLGCTVYLGKGDTNSKSNSSLPRSRSNEVSSLLMMWPSSSIVVAVAVSSCPSLKQSISSSADNCLILSWRALDHSAGSLEYTARYM.

Residues Met-1–Ser-21 form a disordered region. A compositionally biased stretch (low complexity) spans Ser-7 to Ser-21.

This is an uncharacterized protein from Saccharomyces cerevisiae (strain ATCC 204508 / S288c) (Baker's yeast).